We begin with the raw amino-acid sequence, 1170 residues long: Cellulose synthase-like protein D2 (1170 aa).

Disordered stretches follow at residues 1–48 (MASS…RRTH), 54–73 (SYSR…MSPE), and 269–295 (NEVD…EFTS). The segment covering 10–24 (RHSNSSRLSRMSYSG) has biased composition (low complexity). Residues 273-288 (NGGGGGGGGGLGGGDG) show a composition bias toward gly residues. 2 helical membrane passes run 311-331 (VLSP…LFLA) and 341-361 (AMWL…SWLL). Residue Asp-441 is part of the active site. A coiled-coil region spans residues 527-551 (HAREEIKAMKRQREAALDDVVEAVK). The active site involves Asp-873. Helical transmembrane passes span 955–975 (IFLI…QFIV), 981–1001 (TFLT…VLEI), 1027–1047 (LAAV…SFTL), 1070–1090 (SLMI…AVGF), 1104–1124 (LLGG…FAKG), and 1134–1154 (TIVF…WVAI).

The protein belongs to the glycosyltransferase 2 family. Plant cellulose synthase-like D subfamily.

The protein resides in the golgi apparatus membrane. Thought to be a Golgi-localized beta-glycan synthase that polymerize the backbones of noncellulosic polysaccharides (hemicelluloses) of plant cell wall. The sequence is that of Cellulose synthase-like protein D2 (CSLD2) from Oryza sativa subsp. japonica (Rice).